Reading from the N-terminus, the 48-residue chain is Large ribosomal subunit protein bL33B (48 aa).

This sequence belongs to the bacterial ribosomal protein bL33 family.

The polypeptide is Large ribosomal subunit protein bL33B (rpmG2) (Mycoplasma pneumoniae (strain ATCC 29342 / M129 / Subtype 1) (Mycoplasmoides pneumoniae)).